The following is a 361-amino-acid chain: Phospho-N-acetylmuramoyl-pentapeptide-transferase (361 aa).

Helical transmembrane passes span 26–46, 73–93, 98–118, 139–159, 168–188, 200–220, 237–257, 264–284, 289–309, and 339–359; these read SILAALTALFLSLWIGPVLIQ, TMGGSLILMTVTLSVLLWGDL, VWLVLVVMLAFGAIGWYDDWI, IFGLAAGLFLYFTADVPAAVT, IALPLTSISFVAITYFWIVGF, GLAIMPTVLVACALGVFAYAS, AGDLIIICAAIAGAGLGFLWF, VFMGDIGALALGAVLGTIAVI, LVLVVMGGVFVIETLSVIIQV, and VIVRFWIISVVLVLVGLATLK.

Belongs to the glycosyltransferase 4 family. MraY subfamily. Requires Mg(2+) as cofactor.

It is found in the cell inner membrane. It carries out the reaction UDP-N-acetyl-alpha-D-muramoyl-L-alanyl-gamma-D-glutamyl-meso-2,6-diaminopimeloyl-D-alanyl-D-alanine + di-trans,octa-cis-undecaprenyl phosphate = di-trans,octa-cis-undecaprenyl diphospho-N-acetyl-alpha-D-muramoyl-L-alanyl-D-glutamyl-meso-2,6-diaminopimeloyl-D-alanyl-D-alanine + UMP. Its pathway is cell wall biogenesis; peptidoglycan biosynthesis. Its function is as follows. Catalyzes the initial step of the lipid cycle reactions in the biosynthesis of the cell wall peptidoglycan: transfers peptidoglycan precursor phospho-MurNAc-pentapeptide from UDP-MurNAc-pentapeptide onto the lipid carrier undecaprenyl phosphate, yielding undecaprenyl-pyrophosphoryl-MurNAc-pentapeptide, known as lipid I. This is Phospho-N-acetylmuramoyl-pentapeptide-transferase from Xylella fastidiosa (strain M12).